The sequence spans 79 residues: Gas vesicle protein A2 (79 aa).

The alpha helix 1 stretch occupies residues 9–19; sequence LAEVLDRVLDK. Residues 23-31 form a beta-strand 1 region; that stretch reads VDVWARISL. The beta turn stretch occupies residues 32–34; the sequence is VGI. Positions 35 to 43 are beta-strand 2; that stretch reads EILTVEARV. The tract at residues 48-67 is alpha helix 2; it reads VDTFLHYAEEIAKIEQAELT.

The protein belongs to the gas vesicle GvpA family. The gas vesicle shell is 2 nm thick and consists of a single layer of this protein. It forms helical ribs nearly perpendicular to the long axis of the vesicle.

It is found in the gas vesicle shell. In terms of biological role, gas vesicles are hollow, gas filled proteinaceous nanostructures found in several microbial planktonic microorganisms. They allow positioning of halobacteria at the optimal depth for growth in the poorly aerated shallow brine pools of their habitat. GvpA forms the gas vesicle shell. This protein can replace the p-gvpA gene in the p-vac locus and increases the critical collapse pressure (CCP) of hybrid gas vesicles from 0.66 MPa to 0.90 MPa. In stationary phase gas vesicles about 30 times more GvpA1 is found than GvpA2. Its function is as follows. Expression of 2 c-vac DNA fragments containing 2 divergently transcribed regions (gvpE-gvpF-gvpG-gvpH-gvpI-gvpJ-gvpK-gvpL-gvpM and gvpA-gvpC-gvpN-gvpO) allows H.volcanii to produce gas vesicles. All site-directed mutagenesis is tested in H.volcanii. The chain is Gas vesicle protein A2 from Halobacterium salinarum (strain ATCC 700922 / JCM 11081 / NRC-1) (Halobacterium halobium).